Consider the following 175-residue polypeptide: Ribosome maturation factor RimM (175 aa).

Residues 98-175 enclose the PRC barrel domain; it reads EGEYYWHQLE…EMRVDWDADF (78 aa).

It belongs to the RimM family. In terms of assembly, binds ribosomal protein uS19.

It localises to the cytoplasm. In terms of biological role, an accessory protein needed during the final step in the assembly of 30S ribosomal subunit, possibly for assembly of the head region. Essential for efficient processing of 16S rRNA. May be needed both before and after RbfA during the maturation of 16S rRNA. It has affinity for free ribosomal 30S subunits but not for 70S ribosomes. In Pseudomonas aeruginosa (strain ATCC 15692 / DSM 22644 / CIP 104116 / JCM 14847 / LMG 12228 / 1C / PRS 101 / PAO1), this protein is Ribosome maturation factor RimM.